The primary structure comprises 132 residues: Small ribosomal subunit protein uS8 (132 aa).

This sequence belongs to the universal ribosomal protein uS8 family. Part of the 30S ribosomal subunit. Contacts proteins S5 and S12.

Its function is as follows. One of the primary rRNA binding proteins, it binds directly to 16S rRNA central domain where it helps coordinate assembly of the platform of the 30S subunit. The sequence is that of Small ribosomal subunit protein uS8 from Roseiflexus castenholzii (strain DSM 13941 / HLO8).